The primary structure comprises 62 residues: uncharacterized protein (62 aa).

4Fe-4S ferredoxin-type domains lie at 2-31 (AVTIDYSLCKGAECAECVNNCPMEVFEIEG) and 32-62 (DKVVVARPDDCTYCGVCEDVCPTGAVKVEPE). Residues cysteine 10, cysteine 15, cysteine 18, cysteine 22, cysteine 42, cysteine 45, cysteine 48, and cysteine 52 each coordinate [4Fe-4S] cluster.

[4Fe-4S] cluster is required as a cofactor.

This is an uncharacterized protein from Methanocaldococcus jannaschii (strain ATCC 43067 / DSM 2661 / JAL-1 / JCM 10045 / NBRC 100440) (Methanococcus jannaschii).